A 522-amino-acid polypeptide reads, in one-letter code: Hydroxymethylglutaryl-CoA synthase, cytoplasmic (522 aa).

(3S)-3-hydroxy-3-methylglutaryl-CoA contacts are provided by Asp-43 and Ala-44. Glu-95 serves as the catalytic Proton donor/acceptor. 8 residues coordinate (3S)-3-hydroxy-3-methylglutaryl-CoA: Cys-129, Asn-167, Thr-171, Ser-221, His-264, Lys-273, Asn-344, and Ser-378. Catalysis depends on Cys-129, which acts as the Acyl-thioester intermediate. His-264 functions as the Proton donor/acceptor in the catalytic mechanism.

The protein belongs to the thiolase-like superfamily. HMG-CoA synthase family. Homodimer.

It localises to the cytoplasm. The enzyme catalyses acetoacetyl-CoA + acetyl-CoA + H2O = (3S)-3-hydroxy-3-methylglutaryl-CoA + CoA + H(+). The protein operates within metabolic intermediate biosynthesis; (R)-mevalonate biosynthesis; (R)-mevalonate from acetyl-CoA: step 2/3. Its function is as follows. Catalyzes the condensation of acetyl-CoA with acetoacetyl-CoA to form HMG-CoA, which is converted by HMG-CoA reductase (HMGCR) into mevalonate, a precursor for cholesterol synthesis. The protein is Hydroxymethylglutaryl-CoA synthase, cytoplasmic (HMGCS1) of Gallus gallus (Chicken).